A 68-amino-acid polypeptide reads, in one-letter code: Serine palmitoyltransferase small subunit A (68 aa).

The Cytoplasmic segment spans residues 1 to 9; sequence MAFGDAWKQ. Residues 10–26 traverse the membrane as a helical segment; it reads LSWFYYQYLLVTALYML. Residues 27–31 lie on the Lumenal side of the membrane; the sequence is EPWER. The helical transmembrane segment at 32–54 threads the bilayer; sequence TIFNSLLISVAAMAVYTGYVFMP. The Cytoplasmic portion of the chain corresponds to 55–68; the sequence is QHIMAILHYFEVVQ.

Belongs to the SPTSS family. SPTSSA subfamily. As to quaternary structure, component of the serine palmitoyltransferase (SPT) complex, which is composed of SPTLC1, SPTLC2 or SPTLC3 and SPTSSA or SPTSSB. The heterodimer consisting of SPTLC1 and SPTLC2/SPTLC3 forms the catalytic core of the enzyme, while SPTSSA or SPTSSB subunits determine substrate specificity. SPT also interacts with ORMDL proteins, especially ORMDL3, which negatively regulate SPT activity in the presence of ceramides.

It is found in the endoplasmic reticulum membrane. It participates in lipid metabolism; sphingolipid metabolism. In terms of biological role, component of the serine palmitoyltransferase multisubunit enzyme (SPT) that catalyzes the initial and rate-limiting step in sphingolipid biosynthesis by condensing L-serine and activated acyl-CoA (most commonly palmitoyl-CoA) to form long-chain bases. The SPT complex is composed of SPTLC1, SPTLC2 or SPTLC3 and SPTSSA or SPTSSB. Within this complex, the heterodimer consisting of SPTLC1 and SPTLC2/SPTLC3 forms the catalytic core. Within the SPT complex, SPTSSA stimulates the catalytic activity and plays a role in substrate specificity, which depends upon the overall complex composition. The SPTLC1-SPTLC2-SPTSSA complex shows a strong preference for C16-CoA substrate, while the SPTLC1-SPTLC3-SPTSSA isozyme uses both C14-CoA and C16-CoA as substrates, with a slight preference for C14-CoA. Independently of its action as a SPT component, may be involved in MBOAT7 localization to mitochondria-associated membranes, a membrane bridge between the endoplasmic reticulum and mitochondria, may hence affect MBOAT7-catalyzed incorporation of arachidonic acid into phosphatidylinositol. The polypeptide is Serine palmitoyltransferase small subunit A (sptssa) (Danio rerio (Zebrafish)).